Reading from the N-terminus, the 148-residue chain is Arginine repressor (148 aa).

Belongs to the ArgR family.

It localises to the cytoplasm. It functions in the pathway amino-acid biosynthesis; L-arginine biosynthesis [regulation]. Regulates arginine biosynthesis genes. This is Arginine repressor from Chlorobium phaeovibrioides (strain DSM 265 / 1930) (Prosthecochloris vibrioformis (strain DSM 265)).